A 319-amino-acid polypeptide reads, in one-letter code: F-box only protein 8 (319 aa).

Positions 68–111 constitute an F-box domain; the sequence is FINLEMLPPELSFTILSYLNATDLCLASCVWQDLANDELLWQGL. In terms of domain architecture, SEC7 spans 146-276; that stretch reads FNANPDEGVN…LILLSIDLTS (131 aa).

May promote guanine-nucleotide exchange on an ARF. Promotes the activation of ARF through replacement of GDP with GTP (Potential). The sequence is that of F-box only protein 8 (FBXO8) from Bos taurus (Bovine).